The sequence spans 373 residues: Histidinol-phosphate aminotransferase (373 aa).

The residue at position 230 (Lys-230) is an N6-(pyridoxal phosphate)lysine.

Belongs to the class-II pyridoxal-phosphate-dependent aminotransferase family. Histidinol-phosphate aminotransferase subfamily. In terms of assembly, homodimer. It depends on pyridoxal 5'-phosphate as a cofactor.

It catalyses the reaction L-histidinol phosphate + 2-oxoglutarate = 3-(imidazol-4-yl)-2-oxopropyl phosphate + L-glutamate. It functions in the pathway amino-acid biosynthesis; L-histidine biosynthesis; L-histidine from 5-phospho-alpha-D-ribose 1-diphosphate: step 7/9. The protein is Histidinol-phosphate aminotransferase of Synechococcus sp. (strain ATCC 27144 / PCC 6301 / SAUG 1402/1) (Anacystis nidulans).